Consider the following 229-residue polypeptide: Transmembrane protein 182 (229 aa).

The signal sequence occupies residues 1–26 (MRLNIAIFFGALFGALGVLLFLVAFG). Residues 27–114 (SDYWLLATEV…SYDSAVIYRG (88 aa)) are Extracellular-facing. N47 carries an N-linked (GlcNAc...) asparagine glycan. Positions 49 to 59 (TFHHEGFFWRC) are interaction with ITGB1. N-linked (GlcNAc...) asparagine glycosylation is present at N102. The helical transmembrane segment at 115 to 135 (FWAVLMLLGVVAVVIASFLII) threads the bilayer. The Cytoplasmic segment spans residues 136-153 (CAAPFASHFLYKAGGGSY). A helical membrane pass occupies residues 154 to 174 (IAAGILFSLVVMLYVIWVQAV). At 175–200 (ADMESYRNMKMKDCLDFTPSVLYGWS) the chain is on the extracellular side. Residues 201-221 (FFLAPAGIFFSLLAGLLFLVV) traverse the membrane as a helical segment. Topologically, residues 222-229 (GWHIQIHH) are cytoplasmic.

The protein belongs to the TMEM182 family. As to quaternary structure, interacts with ITGB1.

It localises to the cell membrane. In terms of biological role, negatively regulates myogenesis and skeletal muscle regeneration via its association with ITGB1. Modulates ITGB1 activation by decreasing ITGB1-LAMB1 interaction and inhibiting ITGB1-mediated intracellular signaling during myogenesis. This is Transmembrane protein 182 (TMEM182) from Homo sapiens (Human).